The primary structure comprises 418 residues: Light-independent protochlorophyllide reductase subunit N (418 aa).

The [4Fe-4S] cluster site is built by C17, C42, and C103.

This sequence belongs to the BchN/ChlN family. Protochlorophyllide reductase is composed of three subunits; ChlL, ChlN and ChlB. Forms a heterotetramer of two ChlB and two ChlN subunits. Requires [4Fe-4S] cluster as cofactor.

It carries out the reaction chlorophyllide a + oxidized 2[4Fe-4S]-[ferredoxin] + 2 ADP + 2 phosphate = protochlorophyllide a + reduced 2[4Fe-4S]-[ferredoxin] + 2 ATP + 2 H2O. It participates in porphyrin-containing compound metabolism; chlorophyll biosynthesis (light-independent). In terms of biological role, component of the dark-operative protochlorophyllide reductase (DPOR) that uses Mg-ATP and reduced ferredoxin to reduce ring D of protochlorophyllide (Pchlide) to form chlorophyllide a (Chlide). This reaction is light-independent. The NB-protein (ChlN-ChlB) is the catalytic component of the complex. This Prochlorococcus marinus (strain SARG / CCMP1375 / SS120) protein is Light-independent protochlorophyllide reductase subunit N.